The sequence spans 361 residues: MKNLFLFCRAGYEKECAAEIQQRAAELNVGGFVKANNNDAYVVYQCFEEDGGDTLVKQLPLDSLIFARQMFAASELLADLPESDRVSPIVAALSDVSKAGELRVETPDTNEAKELSAFCRKFTVPLRQHLKKSGSLLAQENPKRPIIHVCFIGPGRAYAGYSFSNNSSPYFMGIPRLKMAADAPSRSSLKLDEAFAQFVPKEEQEERVRSGMNAVDLGACPGGWTYQLVRRGMMVSAVDNGPMNEKLMETGQVKHFREDGFRFEPQRKNIYWLVCDMVEKPARVAELIEAWAINGWFKEAIFNLKLPMKSRYKEVMAILNTMQEILKENGINEFQLQCKHLYHDRDEVTVHLWIRPSQAWN.

Residues serine 187, 220-223, aspartate 239, aspartate 259, and aspartate 276 contribute to the S-adenosyl-L-methionine site; that span reads CPGG. Lysine 305 acts as the Proton acceptor in catalysis.

Belongs to the class I-like SAM-binding methyltransferase superfamily. RNA methyltransferase RlmE family. RlmM subfamily. As to quaternary structure, monomer.

Its subcellular location is the cytoplasm. It carries out the reaction cytidine(2498) in 23S rRNA + S-adenosyl-L-methionine = 2'-O-methylcytidine(2498) in 23S rRNA + S-adenosyl-L-homocysteine + H(+). Catalyzes the 2'-O-methylation at nucleotide C2498 in 23S rRNA. The protein is Ribosomal RNA large subunit methyltransferase M of Shewanella sp. (strain MR-4).